Reading from the N-terminus, the 297-residue chain is 4-hydroxy-tetrahydrodipicolinate synthase (297 aa).

Thr-50 is a binding site for pyruvate. Tyr-138 acts as the Proton donor/acceptor in catalysis. Lys-166 acts as the Schiff-base intermediate with substrate in catalysis. A pyruvate-binding site is contributed by Ile-208.

Belongs to the DapA family. As to quaternary structure, homotetramer; dimer of dimers.

Its subcellular location is the cytoplasm. It catalyses the reaction L-aspartate 4-semialdehyde + pyruvate = (2S,4S)-4-hydroxy-2,3,4,5-tetrahydrodipicolinate + H2O + H(+). It functions in the pathway amino-acid biosynthesis; L-lysine biosynthesis via DAP pathway; (S)-tetrahydrodipicolinate from L-aspartate: step 3/4. Functionally, catalyzes the condensation of (S)-aspartate-beta-semialdehyde [(S)-ASA] and pyruvate to 4-hydroxy-tetrahydrodipicolinate (HTPA). The protein is 4-hydroxy-tetrahydrodipicolinate synthase of Gluconobacter oxydans (strain 621H) (Gluconobacter suboxydans).